The following is a 163-amino-acid chain: Neurotrophin-3 (163 aa).

Positions 1-3 (IQS) are cleaved as a signal peptide. The propeptide occupies 4–119 (TSMDQGILTE…VLNRTSRRKR (116 aa)). Residue asparagine 112 is glycosylated (N-linked (GlcNAc...) asparagine). The interval 113–133 (RTSRRKREGKSHRGEYSVCDS) is disordered. Positions 123 to 133 (SHRGEYSVCDS) are enriched in basic and acidic residues.

Belongs to the NGF-beta family.

The protein localises to the secreted. Its function is as follows. Seems to promote the survival of visceral and proprioceptive sensory neurons. The polypeptide is Neurotrophin-3 (NTF3) (Charina bottae (Northern rubber boa)).